Consider the following 1355-residue polypeptide: Probable major glycoprotein (1355 aa).

Positions 1–16 (MKKTMLAIILIPLVYA) are cleaved as a signal peptide. N81, N112, N129, N169, N173, N192, N542, N655, N682, N744, N780, N811, N815, N860, N865, N882, N895, N1213, N1225, N1267, and N1274 each carry an N-linked (GlcNAc...) asparagine; by host glycan. Positions 1245 to 1299 (QIVSMEMEIQDLKLELIQLQKINTSVHMENITGDIDAMKATIEEYRAEMAKLRVT) form a coiled coil. The helical transmembrane segment at 1308-1328 (FIYAILGVIAIGALIAIIFMA) threads the bilayer.

The protein localises to the host membrane. The protein is Probable major glycoprotein (ORF46) of Ictaluridae (bullhead catfishes).